The following is a 430-amino-acid chain: Tol-Pal system protein TolB (430 aa).

The first 21 residues, 1–21, serve as a signal peptide directing secretion; it reads MKQALRVAFGFLMLWAAVLHA.

The protein belongs to the TolB family. The Tol-Pal system is composed of five core proteins: the inner membrane proteins TolA, TolQ and TolR, the periplasmic protein TolB and the outer membrane protein Pal. They form a network linking the inner and outer membranes and the peptidoglycan layer.

The protein localises to the periplasm. Part of the Tol-Pal system, which plays a role in outer membrane invagination during cell division and is important for maintaining outer membrane integrity. TolB occupies a key intermediary position in the Tol-Pal system because it communicates directly with both membrane-embedded components, Pal in the outer membrane and TolA in the inner membrane. This chain is Tol-Pal system protein TolB, found in Klebsiella pneumoniae (strain 342).